A 432-amino-acid polypeptide reads, in one-letter code: Gamma-glutamyl phosphate reductase (432 aa).

It belongs to the gamma-glutamyl phosphate reductase family.

The protein localises to the cytoplasm. It carries out the reaction L-glutamate 5-semialdehyde + phosphate + NADP(+) = L-glutamyl 5-phosphate + NADPH + H(+). The protein operates within amino-acid biosynthesis; L-proline biosynthesis; L-glutamate 5-semialdehyde from L-glutamate: step 2/2. Functionally, catalyzes the NADPH-dependent reduction of L-glutamate 5-phosphate into L-glutamate 5-semialdehyde and phosphate. The product spontaneously undergoes cyclization to form 1-pyrroline-5-carboxylate. This chain is Gamma-glutamyl phosphate reductase, found in Corynebacterium melassecola.